Consider the following 257-residue polypeptide: MSSISMKELLEAGVHFGHQTKRWNPKMKPYIFGARNGIYIIDLQKTVRYFKSAYNFVKESAEQGNTVLFVGTKKQAQDSVAEEATRCGQYYVNQRWLGGMLTNFSTVKQSIERLKKLDAMFEDGTIEAYTKKEALKMDKEREKLEKVLGGIKNMNKLPGMMFVIDPKNEEIAVQEAKKLGIPVVAIVDTNCDPDMIDHVIPGNDDAIRAIRLLTAKIADAVQEGADARNVVLQSGAEGADDLEEALADEVACEASAD.

This sequence belongs to the universal ribosomal protein uS2 family.

The protein is Small ribosomal subunit protein uS2 of Trichlorobacter lovleyi (strain ATCC BAA-1151 / DSM 17278 / SZ) (Geobacter lovleyi).